The chain runs to 452 residues: Inner membrane metabolite transport protein YdjE (452 aa).

The Cytoplasmic portion of the chain corresponds to 1 to 20 (MEQYDQIGARLDRLPLARFH). Residues 21–43 (YRIFGIISFSLLLTGFLSYSGNV) traverse the membrane as a helical segment. Over 44–57 (VLAKLVSNGWSNNF) the chain is Periplasmic. The helical transmembrane segment at 58–80 (LNAAFTSALMFGYFIGSLTGGFI) threads the bilayer. Residues 81–91 (GDYFGRRRAFR) are Cytoplasmic-facing. Residues 92 to 114 (INLLIVGIAATGAAFVPDMYWLI) form a helical membrane-spanning segment. The Periplasmic segment spans residues 115–117 (FFR). Residues 118-140 (FLMGTGMGALIMVGYASFTEFIP) form a helical membrane-spanning segment. At 141-152 (ATVRGKWSARLS) the chain is on the cytoplasmic side. Residues 153-175 (FVGNWSPMLSAAIGVVVIAFFSW) traverse the membrane as a helical segment. Residues 176 to 178 (RIM) lie on the Periplasmic side of the membrane. The helical transmembrane segment at 179-198 (FLLGGIGILLAWFLSGKYFI) threads the bilayer. The Cytoplasmic portion of the chain corresponds to 199 to 265 (ESPRWLAGKG…KGEMLRRTLV (67 aa)). Residues 266–288 (AITVLIAMNISLYTITVWIPTIF) traverse the membrane as a helical segment. Residues 289-297 (VNSGIDVDK) lie on the Periplasmic side of the membrane. A helical membrane pass occupies residues 298–320 (SILMTAVIMIGAPVGIFIAALII). Residues 321–326 (DHFPRR) are Cytoplasmic-facing. A helical transmembrane segment spans residues 327 to 344 (LFGSTLLIIIAVLGYIYS). The Periplasmic segment spans residues 345-353 (IQTTEWAIL). The chain crosses the membrane as a helical span at residues 354–376 (IYGLVMIFFLYMYVCFASAVYIP). Residues 377–388 (ELWPTHLRLRGS) are Cytoplasmic-facing. A helical membrane pass occupies residues 389–411 (GFVNAVGRIVAVFTPYGVAALLT). The Periplasmic segment spans residues 412–415 (HYGS). The helical transmembrane segment at 416-438 (ITVFMVLGVMLLLCALVLSIFGI) threads the bilayer. Topologically, residues 439–452 (ETRKVSLEEISEVN) are cytoplasmic.

Belongs to the major facilitator superfamily. Sugar transporter (TC 2.A.1.1) family.

The protein resides in the cell inner membrane. The sequence is that of Inner membrane metabolite transport protein YdjE (ydjE) from Escherichia coli (strain K12).